Here is a 248-residue protein sequence, read N- to C-terminus: Protein UL24 homolog (248 aa).

Positions 194–248 are disordered; sequence DRPRPTAQGHRPRTHVGPKPSQLTARVPRSARAGRAGGRKGQVGAVGQVCPGAQK. Over residues 218 to 227 the composition is skewed to low complexity; that stretch reads ARVPRSARAG.

Belongs to the herpesviridae UL24 family.

It localises to the virion. The protein localises to the host cytoplasm. Its subcellular location is the host nucleus. It is found in the host nucleolus. The protein resides in the host Golgi apparatus. In terms of biological role, may participate in nuclear egress of viral particles. Plays a role in the dispersal of several host nucleolar proteins including NCL/nucleolin and NPM1. Since deletion of host NCL/nucleolin negatively impact on nuclear egress, UL24 supposedly acts on this process through its effect on host nucleoli. The polypeptide is Protein UL24 homolog (Homo sapiens (Human)).